The sequence spans 636 residues: Chaperone protein HtpG (636 aa).

Positions 1 to 349 (MAKHQFQTEV…SEDLPLNVSR (349 aa)) are a; substrate-binding. A b region spans residues 350 to 562 (EILQENRILA…ADAQMAAMAH (213 aa)). The segment at 563–636 (MFRAMGQAMP…RLSRITAKAL (74 aa)) is c.

The protein belongs to the heat shock protein 90 family. As to quaternary structure, homodimer.

It is found in the cytoplasm. Molecular chaperone. Has ATPase activity. The sequence is that of Chaperone protein HtpG from Aliarcobacter butzleri (strain RM4018) (Arcobacter butzleri).